We begin with the raw amino-acid sequence, 342 residues long: Ribosomal RNA small subunit methyltransferase H (342 aa).

S-adenosyl-L-methionine contacts are provided by residues 42–44, Asp61, Phe88, Asp119, and Gln126; that span reads GGH.

Belongs to the methyltransferase superfamily. RsmH family.

The protein localises to the cytoplasm. It catalyses the reaction cytidine(1402) in 16S rRNA + S-adenosyl-L-methionine = N(4)-methylcytidine(1402) in 16S rRNA + S-adenosyl-L-homocysteine + H(+). Specifically methylates the N4 position of cytidine in position 1402 (C1402) of 16S rRNA. The chain is Ribosomal RNA small subunit methyltransferase H from Corynebacterium jeikeium (strain K411).